Consider the following 261-residue polypeptide: Potassium/proton antiporter CemA (261 aa).

The next 3 helical transmembrane spans lie at 138 to 158 (IISH…YLIL), 184 to 204 (FLIL…GWEL), and 221 to 241 (IISG…KYWI).

Belongs to the CemA family.

Its subcellular location is the plastid. The protein resides in the chloroplast inner membrane. It catalyses the reaction K(+)(in) + H(+)(out) = K(+)(out) + H(+)(in). In terms of biological role, contributes to K(+)/H(+) antiport activity by supporting proton efflux to control proton extrusion and homeostasis in chloroplasts in a light-dependent manner to modulate photosynthesis. Prevents excessive induction of non-photochemical quenching (NPQ) under continuous-light conditions. Indirectly promotes efficient inorganic carbon uptake into chloroplasts. The polypeptide is Potassium/proton antiporter CemA (Pinus koraiensis (Korean pine)).